A 257-amino-acid polypeptide reads, in one-letter code: Zinc import ATP-binding protein ZnuC (257 aa).

The ABC transporter domain occupies 6-221 (VRLEQITVAF…AFVETFGHQV (216 aa)). 38 to 45 (GPNGAGKT) is a binding site for ATP.

It belongs to the ABC transporter superfamily. Zinc importer (TC 3.A.1.15.5) family. As to quaternary structure, the complex is composed of two ATP-binding proteins (ZnuC), two transmembrane proteins (ZnuB) and a solute-binding protein (ZnuA).

The protein resides in the cell inner membrane. It catalyses the reaction Zn(2+)(out) + ATP(in) + H2O(in) = Zn(2+)(in) + ADP(in) + phosphate(in) + H(+)(in). Its function is as follows. Part of the ABC transporter complex ZnuABC involved in zinc import. Responsible for energy coupling to the transport system. This is Zinc import ATP-binding protein ZnuC from Marinobacter nauticus (strain ATCC 700491 / DSM 11845 / VT8) (Marinobacter aquaeolei).